We begin with the raw amino-acid sequence, 464 residues long: Argininosuccinate lyase (464 aa).

It belongs to the lyase 1 family. Argininosuccinate lyase subfamily.

It localises to the cytoplasm. It catalyses the reaction 2-(N(omega)-L-arginino)succinate = fumarate + L-arginine. The protein operates within amino-acid biosynthesis; L-arginine biosynthesis; L-arginine from L-ornithine and carbamoyl phosphate: step 3/3. The polypeptide is Argininosuccinate lyase (Pseudomonas entomophila (strain L48)).